We begin with the raw amino-acid sequence, 514 residues long: ATP synthase subunit alpha (514 aa).

170–177 (GDRQIGKT) lines the ATP pocket.

This sequence belongs to the ATPase alpha/beta chains family. F-type ATPases have 2 components, CF(1) - the catalytic core - and CF(0) - the membrane proton channel. CF(1) has five subunits: alpha(3), beta(3), gamma(1), delta(1), epsilon(1). CF(0) has three main subunits: a(1), b(2) and c(9-12). The alpha and beta chains form an alternating ring which encloses part of the gamma chain. CF(1) is attached to CF(0) by a central stalk formed by the gamma and epsilon chains, while a peripheral stalk is formed by the delta and b chains.

The protein localises to the cell inner membrane. It catalyses the reaction ATP + H2O + 4 H(+)(in) = ADP + phosphate + 5 H(+)(out). Produces ATP from ADP in the presence of a proton gradient across the membrane. The alpha chain is a regulatory subunit. In Pseudomonas savastanoi pv. phaseolicola (strain 1448A / Race 6) (Pseudomonas syringae pv. phaseolicola (strain 1448A / Race 6)), this protein is ATP synthase subunit alpha.